Here is a 236-residue protein sequence, read N- to C-terminus: 2,3,4,5-tetrahydropyridine-2,6-dicarboxylate N-acetyltransferase (236 aa).

The protein belongs to the transferase hexapeptide repeat family. DapH subfamily.

The enzyme catalyses (S)-2,3,4,5-tetrahydrodipicolinate + acetyl-CoA + H2O = L-2-acetamido-6-oxoheptanedioate + CoA. The protein operates within amino-acid biosynthesis; L-lysine biosynthesis via DAP pathway; LL-2,6-diaminopimelate from (S)-tetrahydrodipicolinate (acetylase route): step 1/3. Functionally, catalyzes the transfer of an acetyl group from acetyl-CoA to tetrahydrodipicolinate. This Pediococcus pentosaceus (strain ATCC 25745 / CCUG 21536 / LMG 10740 / 183-1w) protein is 2,3,4,5-tetrahydropyridine-2,6-dicarboxylate N-acetyltransferase.